Consider the following 134-residue polypeptide: Loki profilin-2 (134 aa).

The segment at Leu55–Ile62 is loki loop.

The protein belongs to the Asgard profilin family.

The protein resides in the cytoplasm. The protein localises to the cytoskeleton. Inhibition of rabbit actin polymerization is reduced by phosphatidylinositol-(4,5)-P2(1,2-dipalmitoyl), a soluble form of the phospholipid phosphatidylinositol, suggesting an unknown lipid might regulate actin-profilin interaction in vivo. Its function is as follows. Binds to actin and affects the structure of the cytoskeleton. At high concentrations inhibits spontaneous rabbit actin nucleation. This strongly suggests this archaea has a profilin-regulated actin system, and actin-type genes can be identified in this organism. This chain is Loki profilin-2, found in Lokiarchaeum sp. (strain GC14_75).